The chain runs to 319 residues: HTH-type transcriptional regulator YidZ (319 aa).

The 58-residue stretch at 8–65 (LDLNLLLCLQLLMQERSVTKAAKRMNVTPSAVSKSLAKLRAWFDDPLFVNTPLGLAPT) folds into the HTH lysR-type domain. A DNA-binding region (H-T-H motif) is located at residues 25–44 (VTKAAKRMNVTPSAVSKSLA).

This sequence belongs to the LysR transcriptional regulatory family.

In terms of biological role, involved in anaerobic NO protection. This chain is HTH-type transcriptional regulator YidZ, found in Salmonella typhi.